The primary structure comprises 238 residues: Ribosomal RNA small subunit methyltransferase G (238 aa).

S-adenosyl-L-methionine contacts are provided by residues G77, F82, 128-129 (AE), and R147.

The protein belongs to the methyltransferase superfamily. RNA methyltransferase RsmG family.

It is found in the cytoplasm. Its function is as follows. Specifically methylates the N7 position of guanine in position 535 of 16S rRNA. In Geobacillus sp. (strain WCH70), this protein is Ribosomal RNA small subunit methyltransferase G.